A 651-amino-acid polypeptide reads, in one-letter code: Protein numb homolog (651 aa).

Residues 33–193 (RTGKCSFPVK…ASRTTFTREG (161 aa)) enclose the PID domain. Position 102 is a phosphothreonine; by AAK1 (Thr102). A Phosphoserine modification is found at Ser194. The disordered stretch occupies residues 228–255 (SSVAPGNTAPSPSSPTSPTSDATTSLEM). A compositionally biased stretch (low complexity) spans 235–252 (TAPSPSSPTSPTSDATTS). Thr243 is subject to Phosphothreonine. At Ser244 the chain carries Phosphoserine. Residues Ser276 and Ser295 each carry the phosphoserine; by CaMK1 modification. Disordered regions lie at residues 419–483 (QSSG…SPFQ) and 623–651 (LENKSKQRTNPSPTNPFSSDLQKTFEIEL). Position 425 is a phosphoserine (Ser425). Phosphothreonine is present on Thr436. Residues 436-449 (TPSEADRWLEEVSK) are compositionally biased toward basic and acidic residues. A Phosphoserine modification is found at Ser438. Low complexity predominate over residues 453-466 (AQQPQASAAPLQPV). Residues 630 to 644 (RTNPSPTNPFSSDLQ) show a composition bias toward polar residues. Ser634 carries the post-translational modification Phosphoserine.

In terms of assembly, interacts with SIAH1. Interacts with LNX. Interacts with CDH1. Interacts with TFAP2A and TFAP2B. Interacts with RALBP1 in a complex also containing EPN1 and TFAP2A during interphase and mitosis. Interacts with AAK1. May interact with DUOXA1. Phosphorylated on Ser-276 and Ser-295 by CaMK1. In terms of processing, isoform 1 and isoform 2 are ubiquitinated by LNX leading to their subsequent proteasomal degradation. Ubiquitinated; mediated by SIAH1 and leading to its subsequent proteasomal degradation.

Its subcellular location is the cell membrane. It localises to the endosome membrane. In terms of biological role, regulates clathrin-mediated receptor endocytosis. Plays a role in the process of neurogenesis. Required throughout embryonic neurogenesis to maintain neural progenitor cells, also called radial glial cells (RGCs), by allowing their daughter cells to choose progenitor over neuronal cell fate. Not required for the proliferation of neural progenitor cells before the onset of neurogenesis. Also involved postnatally in the subventricular zone (SVZ) neurogenesis by regulating SVZ neuroblasts survival and ependymal wall integrity. May also mediate local repair of brain ventricular wall damage. This Homo sapiens (Human) protein is Protein numb homolog.